Reading from the N-terminus, the 400-residue chain is Nicotinate phosphoribosyltransferase (400 aa).

Position 220 is a phosphohistidine; by autocatalysis (H220).

This sequence belongs to the NAPRTase family. Transiently phosphorylated on a His residue during the reaction cycle. Phosphorylation strongly increases the affinity for substrates and increases the rate of nicotinate D-ribonucleotide production. Dephosphorylation regenerates the low-affinity form of the enzyme, leading to product release.

The enzyme catalyses nicotinate + 5-phospho-alpha-D-ribose 1-diphosphate + ATP + H2O = nicotinate beta-D-ribonucleotide + ADP + phosphate + diphosphate. It participates in cofactor biosynthesis; NAD(+) biosynthesis; nicotinate D-ribonucleotide from nicotinate: step 1/1. In terms of biological role, catalyzes the synthesis of beta-nicotinate D-ribonucleotide from nicotinate and 5-phospho-D-ribose 1-phosphate at the expense of ATP. The protein is Nicotinate phosphoribosyltransferase of Shigella sonnei (strain Ss046).